We begin with the raw amino-acid sequence, 258 residues long: Chymotrypsin-like elastase family member 1 (258 aa).

The signal sequence occupies residues 1-8 (MLVLYGHS). Residues 9–18 (TQDVPETNAR) constitute a propeptide, activation peptide. Residues 19–256 (VVGGTEARRN…YITWINNVIA (238 aa)) form the Peptidase S1 domain. Cys-48 and Cys-64 are oxidised to a cystine. His-63 acts as the Charge relay system in catalysis. Glu-77, Asn-79, Gln-82, and Glu-87 together coordinate Ca(2+). A glycan (N-linked (GlcNAc...) asparagine) is linked at Asn-79. Asp-111 serves as the catalytic Charge relay system. Disulfide bonds link Cys-145-Cys-212, Cys-176-Cys-192, and Cys-202-Cys-232. The active-site Charge relay system is the Ser-206. Asn-233 carries an N-linked (GlcNAc...) asparagine glycan.

This sequence belongs to the peptidase S1 family. Elastase subfamily. Ca(2+) is required as a cofactor.

It localises to the secreted. The enzyme catalyses Hydrolysis of proteins, including elastin. Preferential cleavage: Ala-|-Xaa.. In terms of biological role, serine proteases that hydrolyze many proteins in addition to elastin. The polypeptide is Chymotrypsin-like elastase family member 1 (CELA1) (Canis lupus familiaris (Dog)).